Here is a 555-residue protein sequence, read N- to C-terminus: Probable apyrase 6 (555 aa).

Basic residues predominate over residues 1-10 (MRRSHARSRV). The interval 1–45 (MRRSHARSRVKNSSSSKSDMDPIKFQIRSGNRAPSSSSTYTLTKP) is disordered. Residues 1 to 55 (MRRSHARSRVKNSSSSKSDMDPIKFQIRSGNRAPSSSSTYTLTKPNSKHAKSNLL) are Cytoplasmic-facing. Polar residues predominate over residues 28–45 (RSGNRAPSSSSTYTLTKP). The helical transmembrane segment at 56 to 76 (LTVGSISVVLGVLFLCYSILF) threads the bilayer. At 77-512 (SGGNLRGSLR…HALFSNHPKT (436 aa)) the chain is on the extracellular side. 89–99 (VVIDGGSTGTR) contributes to the ATP binding site. Catalysis depends on Glu-212, which acts as the Proton acceptor. An ATP-binding site is contributed by 236-246 (GIVELGGASAQ). Asn-267 and Asn-348 each carry an N-linked (GlcNAc...) asparagine glycan. The helical transmembrane segment at 513 to 533 (LHYLIGIPILMTVLVYLVTKW) threads the bilayer. The Cytoplasmic segment spans residues 534-555 (RKPQLKTIYDLEKGRYIVTRIR).

It belongs to the GDA1/CD39 NTPase family. Requires Ca(2+) as cofactor. Detected in mature pollen grains (at the protein level). Also expressed in the veins and hydathode regions of rosette leaves.

Its subcellular location is the cytoplasmic vesicle membrane. It catalyses the reaction a ribonucleoside 5'-triphosphate + 2 H2O = a ribonucleoside 5'-phosphate + 2 phosphate + 2 H(+). Its function is as follows. Catalyzes the hydrolysis of phosphoanhydride bonds of nucleoside tri- and di-phosphates. Involved in the regulation of pollen and anther development. This is Probable apyrase 6 (APY6) from Arabidopsis thaliana (Mouse-ear cress).